A 346-amino-acid chain; its full sequence is S-adenosylmethionine:tRNA ribosyltransferase-isomerase (346 aa).

It belongs to the QueA family. In terms of assembly, monomer.

It is found in the cytoplasm. It carries out the reaction 7-aminomethyl-7-carbaguanosine(34) in tRNA + S-adenosyl-L-methionine = epoxyqueuosine(34) in tRNA + adenine + L-methionine + 2 H(+). It participates in tRNA modification; tRNA-queuosine biosynthesis. In terms of biological role, transfers and isomerizes the ribose moiety from AdoMet to the 7-aminomethyl group of 7-deazaguanine (preQ1-tRNA) to give epoxyqueuosine (oQ-tRNA). In Borreliella afzelii (strain PKo) (Borrelia afzelii), this protein is S-adenosylmethionine:tRNA ribosyltransferase-isomerase.